A 451-amino-acid chain; its full sequence is UPF0210 protein NMC1568 (451 aa).

It belongs to the UPF0210 family. In terms of assembly, homodimer.

The polypeptide is UPF0210 protein NMC1568 (Neisseria meningitidis serogroup C / serotype 2a (strain ATCC 700532 / DSM 15464 / FAM18)).